Reading from the N-terminus, the 37-residue chain is Large ribosomal subunit protein bL36 (37 aa).

This sequence belongs to the bacterial ribosomal protein bL36 family.

This Nocardioides sp. (strain ATCC BAA-499 / JS614) protein is Large ribosomal subunit protein bL36.